The following is a 153-amino-acid chain: 6,7-dimethyl-8-ribityllumazine synthase (153 aa).

Residues Phe21, 55-57, and 79-81 contribute to the 5-amino-6-(D-ribitylamino)uracil site; these read AFE and TVI. 84–85 serves as a coordination point for (2S)-2-hydroxy-3-oxobutyl phosphate; it reads AT. The active-site Proton donor is His87. Phe112 contributes to the 5-amino-6-(D-ribitylamino)uracil binding site. Arg126 contacts (2S)-2-hydroxy-3-oxobutyl phosphate.

It belongs to the DMRL synthase family. As to quaternary structure, forms an icosahedral capsid composed of 60 subunits, arranged as a dodecamer of pentamers.

It catalyses the reaction (2S)-2-hydroxy-3-oxobutyl phosphate + 5-amino-6-(D-ribitylamino)uracil = 6,7-dimethyl-8-(1-D-ribityl)lumazine + phosphate + 2 H2O + H(+). Its pathway is cofactor biosynthesis; riboflavin biosynthesis; riboflavin from 2-hydroxy-3-oxobutyl phosphate and 5-amino-6-(D-ribitylamino)uracil: step 1/2. Functionally, catalyzes the formation of 6,7-dimethyl-8-ribityllumazine by condensation of 5-amino-6-(D-ribitylamino)uracil with 3,4-dihydroxy-2-butanone 4-phosphate. This is the penultimate step in the biosynthesis of riboflavin. This Bacillus cereus (strain 03BB102) protein is 6,7-dimethyl-8-ribityllumazine synthase.